We begin with the raw amino-acid sequence, 302 residues long: MTAALHTSALTSLPLLARGKVRDNYAVGQDRLLMVASDRLSAFDVILGEPIPGKGALLTQMALFWFAKLGHLCPNHLTGEAPESVVTAAELPQVTGRSMLVKRLKPLPVEAVVRGYLAGSGWKEYQESQSVCGVPLPAGLKNAGKLPEPIFTPAAKAEVGEHDENISYEQVEKVVGPELAAQIKKISIEIYKTAAAFALTKGIIIADTKFEFGLDENGTLTLMDEVLTPDSSRYWPIEGYEAAYAAGLNPPSYDKQFVRDWLEAVRINGKPWDKTPPSPQLPPDVVAKTAAKYQEALTRLAG.

The protein belongs to the SAICAR synthetase family.

It carries out the reaction 5-amino-1-(5-phospho-D-ribosyl)imidazole-4-carboxylate + L-aspartate + ATP = (2S)-2-[5-amino-1-(5-phospho-beta-D-ribosyl)imidazole-4-carboxamido]succinate + ADP + phosphate + 2 H(+). Its pathway is purine metabolism; IMP biosynthesis via de novo pathway; 5-amino-1-(5-phospho-D-ribosyl)imidazole-4-carboxamide from 5-amino-1-(5-phospho-D-ribosyl)imidazole-4-carboxylate: step 1/2. This is Phosphoribosylaminoimidazole-succinocarboxamide synthase from Polaromonas sp. (strain JS666 / ATCC BAA-500).